Here is a 118-residue protein sequence, read N- to C-terminus: UPF0134 protein MPN_287 (118 aa).

Belongs to the UPF0134 family.

The chain is UPF0134 protein MPN_287 from Mycoplasma pneumoniae (strain ATCC 29342 / M129 / Subtype 1) (Mycoplasmoides pneumoniae).